The primary structure comprises 380 residues: Septin homolog spn6 (380 aa).

The 271-residue stretch at 27 to 297 folds into the Septin-type G domain; that stretch reads KECGLTIMLC…ERYRREQLTN (271 aa). The tract at residues 37 to 44 is G1 motif; sequence GASGTGKT. GTP-binding positions include 37–44, Thr-72, Gly-98, 177–185, and Arg-246; these read GASGTGKT and KADTFTTPE. Residues 95–98 form a G3 motif region; sequence DTPG. The interval 176–179 is G4 motif; sequence AKAD. A coiled-coil region spans residues 304-380; it reads KLKKEHYERL…KSYKGRGHKK (77 aa).

The protein belongs to the TRAFAC class TrmE-Era-EngA-EngB-Septin-like GTPase superfamily. Septin GTPase family. In terms of assembly, component of the sporulation-specific septin complex composed of at least spn2, spn5, spn6 and spn7.

The protein resides in the cytoplasm. Its subcellular location is the forespore membrane. In terms of biological role, septin-like protein involved in the correct orientation of forespore membrane extension during sporulation. This is Septin homolog spn6 (spn6) from Schizosaccharomyces pombe (strain 972 / ATCC 24843) (Fission yeast).